The chain runs to 274 residues: MKLPKGTRSSVYFAQHPEKEPLPSRQEVKQTPVIMAKIKGPGPAKYLRPSCTGYIDHDISMFKAPAYTLHSRHSEKRMVCHSSPGPCYLLDPKITRFGMSSCPQVPMEERISNLRLNPTLASCQYYFEKIHPPGERRAPQYTFGYRRPYRVMDLNPAPNQYQMPLLLGPNTPVSRAAPCYSLASRDKNWFYKEDVAGGPGPTTYARPEPSIYQNRSPTYSMAKRFAYPLDLTPRPGPGSHEVQQVTVHKPHIPAFTMGIKHSLHLCPLVIDIRD.

The interval 1 to 27 (MKLPKGTRSSVYFAQHPEKEPLPSRQE) is disordered. Positions 16-27 (HPEKEPLPSRQE) are enriched in basic and acidic residues. 2 STPGR repeats span residues 199–224 (PGPT…MAKR) and 235–260 (PGPG…MGIK).

The protein belongs to the CIMAP family.

The polypeptide is Protein CIMAP1C (Homo sapiens (Human)).